Reading from the N-terminus, the 714-residue chain is Fatty acid oxidation complex subunit alpha (714 aa).

An enoyl-CoA hydratase region spans residues 1–190 (MEMASAFTLN…KLGLVDDVVP (190 aa)). The 3-hydroxyacyl-CoA dehydrogenase stretch occupies residues 306-714 (APLNSVGILG…FWKTTATDLQ (409 aa)).

The protein in the N-terminal section; belongs to the enoyl-CoA hydratase/isomerase family. This sequence in the central section; belongs to the 3-hydroxyacyl-CoA dehydrogenase family. In terms of assembly, heterotetramer of two alpha chains (FadJ) and two beta chains (FadI).

It localises to the cytoplasm. It carries out the reaction a (3S)-3-hydroxyacyl-CoA = a (2E)-enoyl-CoA + H2O. The catalysed reaction is a 4-saturated-(3S)-3-hydroxyacyl-CoA = a (3E)-enoyl-CoA + H2O. The enzyme catalyses a (3S)-3-hydroxyacyl-CoA + NAD(+) = a 3-oxoacyl-CoA + NADH + H(+). It catalyses the reaction (3S)-3-hydroxybutanoyl-CoA = (3R)-3-hydroxybutanoyl-CoA. It participates in lipid metabolism; fatty acid beta-oxidation. Functionally, catalyzes the formation of a hydroxyacyl-CoA by addition of water on enoyl-CoA. Also exhibits 3-hydroxyacyl-CoA epimerase and 3-hydroxyacyl-CoA dehydrogenase activities. This is Fatty acid oxidation complex subunit alpha from Escherichia coli O7:K1 (strain IAI39 / ExPEC).